The following is a 367-amino-acid chain: MKMEDMSLSGLDNTKLEALAHDVYSDLVEDACLGLCFEVHRAVKQGYFFLDETDQESMKDFEIVDQPGVDIFGQVYNQWKNKECVCPNCSRSIAASRFAPHLEKCLGMGRNSSRIANRRIASSNNTSKSESDQEDNDDINDNDWSYGSEKKAKKRKSEKNPNSPRRSKSLKHKNGELSGSVNPDMYKYNYSSGISYETLGPEELRSILTTQCGVVSEHTKKMCTRSQRCPQHTDEQRRAVRVFLLGPSASTLPDADTMLENEAYEPPDGQLIMSRLHWDASSDISPSDSASSKASTNNSESKRPKKKKPSTLSLTPAGERDKAQERDRIAGSGSSGSSSQNALGLSSRKKRPKLAVPPAPSIYDDLN.

The SGF11-type zinc finger occupies Cys-84–Cys-105. The span at Ala-116–Asn-125 shows a compositional bias: low complexity. The tract at residues Ala-116–Asp-184 is disordered. Over residues Asp-132–Asp-141 the composition is skewed to acidic residues. The region spanning Leu-199 to Pro-266 is the SCA7 domain. The span at Ala-280–Ser-299 shows a compositional bias: low complexity. Residues Ala-280 to Asn-367 form a disordered region. Over residues Gly-318 to Ile-329 the composition is skewed to basic and acidic residues. The span at Ala-330 to Ser-346 shows a compositional bias: low complexity.

Belongs to the SGF11 family. In terms of assembly, component of some SAGA transcription coactivator-HAT complexes. Within the SAGA complex, participates in a subcomplex of SAGA called the DUB module (deubiquitination module).

It is found in the nucleus. In terms of biological role, component of the transcription regulatory histone acetylation (HAT) complex SAGA, a multiprotein complex that activates transcription by remodeling chromatin and mediating histone acetylation and deubiquitination. Within the SAGA complex, participates in a subcomplex that specifically deubiquitinates histone H2B. The SAGA complex is recruited to specific gene promoters by activators, where it is required for transcription. The chain is Ataxin-7-like protein 3 (atxn7l3) from Danio rerio (Zebrafish).